We begin with the raw amino-acid sequence, 870 residues long: DNA mismatch repair protein MutS (870 aa).

617–624 is an ATP binding site; sequence GPNMAGKS.

It belongs to the DNA mismatch repair MutS family.

Its function is as follows. This protein is involved in the repair of mismatches in DNA. It is possible that it carries out the mismatch recognition step. This protein has a weak ATPase activity. The protein is DNA mismatch repair protein MutS of Phocaeicola vulgatus (strain ATCC 8482 / DSM 1447 / JCM 5826 / CCUG 4940 / NBRC 14291 / NCTC 11154) (Bacteroides vulgatus).